We begin with the raw amino-acid sequence, 754 residues long: Endoribonuclease Dicer-like (754 aa).

The region spanning 132–251 is the PAZ domain; sequence QLMCDAKRLS…LPPELCLLLP (120 aa). RNase III domains are found at residues 298-418 and 613-734; these read FAIT…TGPN and AQTV…LACG. The Mn(2+) site is built by Glu-336, Asp-404, Glu-407, Glu-649, Asp-720, and Glu-723.

In terms of assembly, homodimer. It depends on Mg(2+) as a cofactor. The cofactor is Mn(2+).

Its function is as follows. Involved in cleaving double-stranded RNA in the RNA interference (RNAi) pathway. It produces 21 to 23 bp dsRNAs (siRNAs) which target the selective destruction of homologous RNAs. The sequence is that of Endoribonuclease Dicer-like from Giardia intestinalis (strain ATCC 50803 / WB clone C6) (Giardia lamblia).